We begin with the raw amino-acid sequence, 231 residues long: CLAVATA3/ESR (CLE)-related protein 4B-1 (231 aa).

The signal sequence occupies residues 1-21 (MATNTMLCLLILSVVLALAFA). The required for secretion from the host cytoplasm to the host apoplasm stretch occupies residues 21–83 (ATNKKGDEEP…SNLLPNNNWM (63 aa)). The N-linked (GlcNAc...) asparagine glycan is linked to Asn-32. The disordered stretch occupies residues 116-231 (RKTGMHSQRH…APAGPDPIHH (116 aa)). 2 stretches are compositionally biased toward basic and acidic residues: residues 125 to 137 (HHEE…EKRV) and 144 to 221 (PIHH…EKRG). An A-1 repeat occupies 127-135 (EETTLEQEK). The 5 X approximate repeat A stretch occupies residues 127-219 (EETTLEQEKR…HEETTFEQEK (93 aa)). A CLE-1 repeat occupies 136–147 (RVAGAGPDPIHH). The interval 136-231 (RVAGAGPDPI…APAGPDPIHH (96 aa)) is 5 X approximate repeat CLE. The A-2 repeat unit spans residues 148 to 156 (QDTTLEQEK). Residues 157–168 (RAVPAGPDPKHH) form a CLE-2 repeat. The stretch at 169–177 (EETTLEQEK) is one A-3 repeat. Residues 178 to 189 (RAVPAGPDPKHH) form a CLE-3 repeat. The A-4 repeat unit spans residues 190 to 198 (EETTLEQEK). A CLE-4 repeat occupies 199–210 (RAVPAGPDPKHH). An A-5 repeat occupies 211-219 (EETTFEQEK). The CLE-5 repeat unit spans residues 220-231 (RGAPAGPDPIHH).

It belongs to the CLV3/ESR signal peptide family. Highly expressed exclusively within the dorsal esophageal gland cell during syncytium formation in host plants.

It is found in the secreted. It localises to the host cytoplasm. The protein resides in the host extracellular space. Its subcellular location is the extracellular space. The protein localises to the apoplast. Functionally, mimics host plant CLE extracellular signal peptides that regulate cell fate. May play a role in the differentiation or division of feeding cells (syncytia) induced in plant roots during infection. In Globodera rostochiensis (Golden nematode worm), this protein is CLAVATA3/ESR (CLE)-related protein 4B-1 (CLE-4B-1).